The following is a 516-amino-acid chain: MSLEHWNLCLQRLQSEFSTSQFNTWIRPLQAEMLPNGELCLSAPNRFVLDWVSNKYQTRIKELLSEFAGDDLAPALKLAVKAQNFAQANQMSPPPPPVSSEPAINPLNNEVARESGYRPGFGLMDDEEGSPNADLEFEAPLTLSGTGLRGELEPYEQGQLPLTAPKRKVQVEGGINHGANLNNSFTFDNFIEGKSNQLAHAAALQVAENPGGAYNPLFIYGGVGLGKTHLMQAVGTEMMRHNPNAKVVYLHSERFVADMVKALQLNAINDFKRYYRSVDALLIDDIQFFAGKDRTQEEFFHTFNALLEGGQQMILTCDRYPKEIQGLEDRLKSRFGWGLTVAIEPPELETRVAILMRKADESGIKLSYDSAFFIAQKIRSNVRELEGALKRVIANSHFTGRAITPDFVRESLKDLLALQDKLVNIDNIQRIVAEYYKIKISDLLSKRRSRSVARPRQVAMSLAKELTNHSLPEIGDAFGGRDHTTALHAIRKIKELQDTDSDIREDYKQLMRILTT.

Residues methionine 1–leucine 72 form a domain I, interacts with DnaA modulators region. Positions leucine 72–alanine 179 are domain II. Positions asparagine 180–serine 396 are domain III, AAA+ region. Residues glycine 224, glycine 226, lysine 227, and threonine 228 each coordinate ATP. The segment at histidine 397 to threonine 516 is domain IV, binds dsDNA.

It belongs to the DnaA family. As to quaternary structure, oligomerizes as a right-handed, spiral filament on DNA at oriC.

It localises to the cytoplasm. Functionally, plays an essential role in the initiation and regulation of chromosomal replication. ATP-DnaA binds to the origin of replication (oriC) to initiate formation of the DNA replication initiation complex once per cell cycle. Binds the DnaA box (a 9 base pair repeat at the origin) and separates the double-stranded (ds)DNA. Forms a right-handed helical filament on oriC DNA; dsDNA binds to the exterior of the filament while single-stranded (ss)DNA is stabiized in the filament's interior. The ATP-DnaA-oriC complex binds and stabilizes one strand of the AT-rich DNA unwinding element (DUE), permitting loading of DNA polymerase. After initiation quickly degrades to an ADP-DnaA complex that is not apt for DNA replication. Binds acidic phospholipids. The polypeptide is Chromosomal replication initiator protein DnaA (Marinomonas sp. (strain MWYL1)).